The following is a 33-amino-acid chain: Large ribosomal subunit protein uL24 (33 aa).

The protein belongs to the universal ribosomal protein uL24 family. In terms of assembly, component of the large ribosomal subunit.

The protein localises to the cytoplasm. Its function is as follows. Component of the large ribosomal subunit. The ribosome is a large ribonucleoprotein complex responsible for the synthesis of proteins in the cell. In Xenopus laevis (African clawed frog), this protein is Large ribosomal subunit protein uL24 (rpl26).